The following is a 602-amino-acid chain: Proteasome-associated ATPase (602 aa).

The stretch at 13–89 (PDAAEVERLR…LREEVDRLGQ (77 aa)) forms a coiled coil. Residue 289–294 (GCGKTL) participates in ATP binding. The interval 601-602 (YL) is docks into pockets in the proteasome alpha-ring.

This sequence belongs to the AAA ATPase family. In terms of assembly, homohexamer. Assembles into a hexameric ring structure that caps the 20S proteasome core. Strongly interacts with the prokaryotic ubiquitin-like protein Pup through a hydrophobic interface; the interacting region of ARC lies in its N-terminal coiled-coil domain. There is one Pup binding site per ARC hexamer ring. Upon ATP-binding, the C-terminus of ARC interacts with the alpha-rings of the proteasome core, possibly by binding to the intersubunit pockets.

It participates in protein degradation; proteasomal Pup-dependent pathway. Functionally, ATPase which is responsible for recognizing, binding, unfolding and translocation of pupylated proteins into the bacterial 20S proteasome core particle. May be essential for opening the gate of the 20S proteasome via an interaction with its C-terminus, thereby allowing substrate entry and access to the site of proteolysis. Thus, the C-termini of the proteasomal ATPase may function like a 'key in a lock' to induce gate opening and therefore regulate proteolysis. The protein is Proteasome-associated ATPase of Mycobacteroides abscessus (strain ATCC 19977 / DSM 44196 / CCUG 20993 / CIP 104536 / JCM 13569 / NCTC 13031 / TMC 1543 / L948) (Mycobacterium abscessus).